Reading from the N-terminus, the 248-residue chain is Probable transcriptional regulatory protein Mnod_7401 (248 aa).

This sequence belongs to the TACO1 family.

The protein resides in the cytoplasm. The chain is Probable transcriptional regulatory protein Mnod_7401 from Methylobacterium nodulans (strain LMG 21967 / CNCM I-2342 / ORS 2060).